The chain runs to 1222 residues: ATP-dependent helicase/nuclease subunit A (1222 aa).

A UvrD-like helicase ATP-binding domain is found at 39 to 495 (QKRTAQQIEA…ILLKENFRSQ (457 aa)). 60–67 (ASAGSGKT) serves as a coordination point for ATP. In terms of domain architecture, UvrD-like helicase C-terminal spans 524-810 (QLIAGSHAQT…NLMTIHKSKG (287 aa)).

It belongs to the helicase family. AddA subfamily. As to quaternary structure, heterodimer of AddA and AddB/RexB. Mg(2+) is required as a cofactor.

The enzyme catalyses Couples ATP hydrolysis with the unwinding of duplex DNA by translocating in the 3'-5' direction.. The catalysed reaction is ATP + H2O = ADP + phosphate + H(+). Functionally, the heterodimer acts as both an ATP-dependent DNA helicase and an ATP-dependent, dual-direction single-stranded exonuclease. Recognizes the chi site generating a DNA molecule suitable for the initiation of homologous recombination. The AddA nuclease domain is required for chi fragment generation; this subunit has the helicase and 3' -&gt; 5' nuclease activities. This is ATP-dependent helicase/nuclease subunit A from Streptococcus pyogenes serotype M3 (strain ATCC BAA-595 / MGAS315).